Reading from the N-terminus, the 597-residue chain is Proteasome-associated ATPase (597 aa).

Over residues 1–12 the composition is skewed to basic and acidic residues; that stretch reads MQHDRPGSRPEE. The interval 1-22 is disordered; it reads MQHDRPGSRPEEGGEQQIGGDA. Residues 21 to 97 adopt a coiled-coil conformation; the sequence is DAELNSQIRL…REEVDRLAQP (77 aa). ATP is bound at residue 284 to 289; the sequence is GCGKTL. A docks into pockets in the proteasome alpha-ring region spans residues 596-597; that stretch reads YL.

It belongs to the AAA ATPase family. In terms of assembly, homohexamer. Assembles into a hexameric ring structure that caps the 20S proteasome core. Strongly interacts with the prokaryotic ubiquitin-like protein Pup through a hydrophobic interface; the interacting region of ARC lies in its N-terminal coiled-coil domain. There is one Pup binding site per ARC hexamer ring. Upon ATP-binding, the C-terminus of ARC interacts with the alpha-rings of the proteasome core, possibly by binding to the intersubunit pockets.

It functions in the pathway protein degradation; proteasomal Pup-dependent pathway. ATPase which is responsible for recognizing, binding, unfolding and translocation of pupylated proteins into the bacterial 20S proteasome core particle. May be essential for opening the gate of the 20S proteasome via an interaction with its C-terminus, thereby allowing substrate entry and access to the site of proteolysis. Thus, the C-termini of the proteasomal ATPase may function like a 'key in a lock' to induce gate opening and therefore regulate proteolysis. The protein is Proteasome-associated ATPase of Saccharopolyspora erythraea (strain ATCC 11635 / DSM 40517 / JCM 4748 / NBRC 13426 / NCIMB 8594 / NRRL 2338).